Here is a 443-residue protein sequence, read N- to C-terminus: Serine/threonine-protein phosphatase 2A 55 kDa regulatory subunit B beta isoform (443 aa).

7 WD repeats span residues 22-61, 87-128, 171-209, 220-260, 279-317, 334-375, and 410-443; these read TEADIISTVEFNPTGELLATGDKGGRVVVFQREQESKSQP, EIEE…KRPE, AHTYHINSISVNSDYETYMSTDDLRINLWNLEITNRSFN, ELTE…LCDN, EIISSISDVKFSHSGRYLMTRDYLTVKVWDINMESKPLE, ENDC…DVTL, and DFSKKILHTAWHPNENIIAVAATNNLYIFQDKVN.

Belongs to the phosphatase 2A regulatory subunit B family. PP2A consists of a common heterodimeric core enzyme, composed of a 36 kDa catalytic subunit (subunit C) and a 65 kDa constant regulatory subunit (PR65 or subunit A), that associates with a variety of regulatory subunits.

Its subcellular location is the cytoplasm. The protein localises to the cytoskeleton. It localises to the membrane. The B regulatory subunit might modulate substrate selectivity and catalytic activity, and might also direct the localization of the catalytic enzyme to a particular subcellular compartment. This chain is Serine/threonine-protein phosphatase 2A 55 kDa regulatory subunit B beta isoform (ppp2r2b), found in Carassius auratus (Goldfish).